Reading from the N-terminus, the 471-residue chain is Venom prothrombin activator vestarin-D2 (471 aa).

An N-terminal signal peptide occupies residues 1 to 20 (MAPQLLLCLILTFLWSLPEA). The propeptide occupies 21 to 40 (ESNVFLKSNVANRFLQRTKR). The region spanning 41–86 (ANSIFEEIRPGNIERECVEEKCSKEEAREVFQDNEKTEAFWTVYVD) is the Gla domain. 10 positions are modified to 4-carboxyglutamate: E46, E47, E54, E56, E59, E60, E65, E66, E69, and E75. C57 and C62 are oxidised to a cystine. The region spanning 86-122 (DGDQCLSNPCHYRGTCKDGIGSYTCTCLPGYEGKNCE) is the EGF-like 1; calcium-binding domain. Intrachain disulfides connect C90-C101, C95-C110, C112-C121, C129-C140, C136-C149, C151-C164, C172-C333, C233-C238, C381-C395, and C406-C434. The O-linked (Hex...) serine glycan is linked to S92. Residues 129-164 (CRLFNGNCWHFCKTVQNDTQCSCAEGYRLGVDGFSC) form the EGF-like 2 domain. A propeptide spans 182 to 226 (REASLPDFHFSDDYDAIDENNLVETVQSQSATLLKKSDNPSPDIR) (activation peptide). Residues 227 to 458 (IVSGLDCKLG…FIPWIKTIMR (232 aa)) form the Peptidase S1 domain. The active-site Charge relay system is the H268. N271 carries N-linked (GlcNAc...) asparagine glycosylation. The active-site Charge relay system is D313. Residue S410 is the Charge relay system of the active site.

The protein belongs to the peptidase S1 family. Snake venom subfamily. Heterodimer of a light chain and a heavy chain; disulfide-linked. The vitamin K-dependent, enzymatic carboxylation of some glutamate residues allows the modified protein to bind calcium. As to expression, expressed by the venom gland.

It is found in the secreted. It carries out the reaction Selective cleavage of Arg-|-Thr and then Arg-|-Ile bonds in prothrombin to form thrombin.. Its function is as follows. Snake prothrombin activator that attacks the hemostatic system of prey. This protein is functionally similar to blood coagulation factor Xa. The chain is Venom prothrombin activator vestarin-D2 from Demansia vestigiata (Lesser black whip snake).